The primary structure comprises 55 residues: Large ribosomal subunit protein bL33 (55 aa).

The protein belongs to the bacterial ribosomal protein bL33 family.

The polypeptide is Large ribosomal subunit protein bL33 (Jannaschia sp. (strain CCS1)).